The following is a 178-amino-acid chain: uncharacterized protein (178 aa).

Residues 1–19 (MKKLLIVTMLFTLALSAQA) form the signal peptide.

The protein belongs to the opacity porin family.

This is an uncharacterized protein from Haemophilus influenzae (strain ATCC 51907 / DSM 11121 / KW20 / Rd).